Consider the following 365-residue polypeptide: 1-aminocyclopropane-1-carboxylate oxidase homolog 1 (365 aa).

A Fe2OG dioxygenase domain is found at 212–313; the sequence is CTNSLLLLGH…RISVACFFSS (102 aa). Residues histidine 238, aspartate 240, and histidine 294 each coordinate Fe cation.

The protein belongs to the iron/ascorbate-dependent oxidoreductase family. It depends on Fe cation as a cofactor.

In Arabidopsis thaliana (Mouse-ear cress), this protein is 1-aminocyclopropane-1-carboxylate oxidase homolog 1.